Consider the following 189-residue polypeptide: Putative manganese efflux pump MntP (189 aa).

The next 6 membrane-spanning stretches (helical) occupy residues 3 to 23 (LSAT…ASIG), 41 to 61 (LIFG…GLFA), 65 to 85 (ILEW…CRMI), 104 to 124 (FWVL…IGVG), 132 to 152 (IVHT…LGML), and 165 to 185 (AEII…YEHI).

Belongs to the MntP (TC 9.B.29) family.

It is found in the cell inner membrane. In terms of biological role, probably functions as a manganese efflux pump. This Yersinia enterocolitica serotype O:8 / biotype 1B (strain NCTC 13174 / 8081) protein is Putative manganese efflux pump MntP.